The primary structure comprises 224 residues: Peptidyl-prolyl cis-trans isomerase FKBP3 (224 aa).

Alanine 2 is subject to N-acetylalanine. Serine 36 carries the phosphoserine modification. Residues 89–102 are compositionally biased toward basic and acidic residues; it reads KLNEDKPKETKSEE. Residues 89-111 are disordered; it reads KLNEDKPKETKSEETLDEGPPKY. Residue lysine 99 is modified to N6-acetyllysine. Residues 128–224 form the PPIase FKBP-type domain; the sequence is GDVVHCWYTG…TFEVELVDID (97 aa). Serine 152 bears the Phosphoserine mark. An N6-acetyllysine modification is found at lysine 170.

Belongs to the FKBP-type PPIase family.

The protein resides in the nucleus. It catalyses the reaction [protein]-peptidylproline (omega=180) = [protein]-peptidylproline (omega=0). Inhibited preferentially by rapamycin over FK506. Functionally, FK506- and rapamycin-binding proteins (FKBPs) constitute a family of receptors for the two immunosuppressants which inhibit T-cell proliferation by arresting two distinct cytoplasmic signal transmission pathways. PPIases accelerate the folding of proteins. The chain is Peptidyl-prolyl cis-trans isomerase FKBP3 (FKBP3) from Homo sapiens (Human).